The following is a 441-amino-acid chain: Protein eva-1 homolog C (441 aa).

The tract at residues 1–23 (MLLPGRARQPPTPQPVQHPGLRR) is disordered. A signal peptide spans 1-48 (MLLPGRARQPPTPQPVQHPGLRRQVEPPGQLLRLFYCTVLVCSKEISA). Residues 49–322 (LTDFSGYLTK…AYIRAHPERA (274 aa)) lie on the Extracellular side of the membrane. Residue Asn62 is glycosylated (N-linked (GlcNAc...) asparagine). An SUEL-type lectin 1 domain is found at 67-159 (ACDGDYLNLQ…KYLLVSFKCQ (93 aa)). Asn165 is a glycosylation site (N-linked (GlcNAc...) asparagine). The 93-residue stretch at 168 to 260 (VCEDQELKLH…KYLTVTYACV (93 aa)) folds into the SUEL-type lectin 2 domain. A helical membrane pass occupies residues 323–343 (ALLFVSSVCIGLALTLCALVI). At 344 to 441 (RESCAKDFRD…SLPRNMGQFY (98 aa)) the chain is on the cytoplasmic side. Positions 362–390 (VPGSDKVEEDSEDEEEEEDPSESDFPGEL) are disordered. Over residues 368–383 (VEEDSEDEEEEEDPSE) the composition is skewed to acidic residues.

This sequence belongs to the EVA1 family. Ubiquitous.

The protein resides in the membrane. Functionally, binds heparin. In Homo sapiens (Human), this protein is Protein eva-1 homolog C (EVA1C).